The sequence spans 238 residues: Ribonuclease PH (238 aa).

A disordered region spans residues 66-88 (LPRSTHTRSDREAARGKQSGRTQ). Residues arginine 86 and 124–126 (GTR) contribute to the phosphate site.

Belongs to the RNase PH family. In terms of assembly, homohexameric ring arranged as a trimer of dimers.

It carries out the reaction tRNA(n+1) + phosphate = tRNA(n) + a ribonucleoside 5'-diphosphate. Functionally, phosphorolytic 3'-5' exoribonuclease that plays an important role in tRNA 3'-end maturation. Removes nucleotide residues following the 3'-CCA terminus of tRNAs; can also add nucleotides to the ends of RNA molecules by using nucleoside diphosphates as substrates, but this may not be physiologically important. Probably plays a role in initiation of 16S rRNA degradation (leading to ribosome degradation) during starvation. This chain is Ribonuclease PH, found in Ralstonia pickettii (strain 12J).